Reading from the N-terminus, the 81-residue chain is ATP synthase subunit c (81 aa).

Helical transmembrane passes span 6–26 (AAASVIAAALAVGLAAIGPGF) and 57–77 (LAFMESLTIYGLVIALVLLFA).

It belongs to the ATPase C chain family. In terms of assembly, F-type ATPases have 2 components, F(1) - the catalytic core - and F(0) - the membrane proton channel. F(1) has five subunits: alpha(3), beta(3), gamma(1), delta(1), epsilon(1). F(0) has four main subunits: a(1), b(1), b'(1) and c(10-14). The alpha and beta chains form an alternating ring which encloses part of the gamma chain. F(1) is attached to F(0) by a central stalk formed by the gamma and epsilon chains, while a peripheral stalk is formed by the delta, b and b' chains.

It is found in the cellular thylakoid membrane. In terms of biological role, f(1)F(0) ATP synthase produces ATP from ADP in the presence of a proton or sodium gradient. F-type ATPases consist of two structural domains, F(1) containing the extramembraneous catalytic core and F(0) containing the membrane proton channel, linked together by a central stalk and a peripheral stalk. During catalysis, ATP synthesis in the catalytic domain of F(1) is coupled via a rotary mechanism of the central stalk subunits to proton translocation. Its function is as follows. Key component of the F(0) channel; it plays a direct role in translocation across the membrane. A homomeric c-ring of between 10-14 subunits forms the central stalk rotor element with the F(1) delta and epsilon subunits. The polypeptide is ATP synthase subunit c (Rippkaea orientalis (strain PCC 8801 / RF-1) (Cyanothece sp. (strain PCC 8801))).